The following is a 470-amino-acid chain: Sperm-associated antigen 8 (470 aa).

A compositionally biased stretch (polar residues) spans 1–21 (METTESTEGSLSRSCDVQPSS). 3 disordered regions span residues 1–70 (METT…PPAH), 117–178 (SGTC…GQGP), and 302–321 (LTTQ…DSYQ). The span at 27–48 (PSEPVPSSSSSPRSTAPAEAPA) shows a compositional bias: low complexity. Over residues 51–60 (SVLTEPSSDS) the composition is skewed to polar residues. 2 stretches are compositionally biased toward low complexity: residues 122–175 (LGQS…ADPG) and 303–316 (TTQP…STTQ). Mn regions lie at residues 312–325 (SSTT…LPRH) and 364–378 (ESVT…LVRA).

It belongs to the SPAG8 family. In terms of assembly, microtubule inner protein component of sperm flagellar doublet microtubules. Interacts with FHL5 (via second LIM domain). Interacts with RANBP9. In terms of tissue distribution, expressed in testis (at protein level). Not detected in brain, heart, kidney, spleen, liver, lung, thymus and colon (at protein level).

The protein resides in the cytoplasm. Its subcellular location is the nucleus. The protein localises to the cytoplasmic vesicle. It is found in the secretory vesicle. It localises to the acrosome. The protein resides in the cytoskeleton. Its subcellular location is the microtubule organizing center. The protein localises to the spindle. It is found in the cilium axoneme. It localises to the flagellum axoneme. Its function is as follows. Microtubule inner protein (MIP) part of the dynein-decorated doublet microtubules (DMTs) in cilia axoneme, which is required for motile cilia beating. Plays a role in spermatogenesis by enhancing the binding of CREM isoform tau to its coactivator FHL5 and increasing the FHL5-regulated transcriptional activation of CREM isoform tau. Involved in the acrosome reaction and in binding of sperm to the zona pellucida. Plays a role in regulation of the cell cycle by controlling progression through the G2/M phase, possibly by delaying the activation of CDK1 which is required for entry into mitosis. May play a role in fertility and microtubule formation through interaction with RANBP9. The protein is Sperm-associated antigen 8 of Mus musculus (Mouse).